A 381-amino-acid polypeptide reads, in one-letter code: 4-hydroxyphenylpyruvate dioxygenase (381 aa).

VOC domains are found at residues 22–156 (GMDA…LVDR) and 184–338 (AIDH…IFTK). Fe cation-binding residues include H187, H270, and E349.

This sequence belongs to the 4HPPD family. As to quaternary structure, homodimer. Fe cation serves as cofactor.

The enzyme catalyses 3-(4-hydroxyphenyl)pyruvate + O2 = homogentisate + CO2. It participates in amino-acid degradation; L-phenylalanine degradation; acetoacetate and fumarate from L-phenylalanine: step 3/6. The chain is 4-hydroxyphenylpyruvate dioxygenase (hpd) from Streptomyces avermitilis (strain ATCC 31267 / DSM 46492 / JCM 5070 / NBRC 14893 / NCIMB 12804 / NRRL 8165 / MA-4680).